We begin with the raw amino-acid sequence, 392 residues long: Queuine tRNA-ribosyltransferase (392 aa).

Catalysis depends on aspartate 93, which acts as the Proton acceptor. Substrate is bound by residues aspartate 93–tyrosine 97, aspartate 147, glutamine 189, and glycine 216. The interval glycine 247–aspartate 253 is RNA binding. Aspartate 266 serves as the catalytic Nucleophile. The RNA binding; important for wobble base 34 recognition stretch occupies residues threonine 271–arginine 275. Zn(2+) is bound by residues cysteine 304, cysteine 306, cysteine 309, and histidine 335.

This sequence belongs to the queuine tRNA-ribosyltransferase family. As to quaternary structure, homodimer. Within each dimer, one monomer is responsible for RNA recognition and catalysis, while the other monomer binds to the replacement base PreQ1. Requires Zn(2+) as cofactor.

It carries out the reaction 7-aminomethyl-7-carbaguanine + guanosine(34) in tRNA = 7-aminomethyl-7-carbaguanosine(34) in tRNA + guanine. It functions in the pathway tRNA modification; tRNA-queuosine biosynthesis. Functionally, catalyzes the base-exchange of a guanine (G) residue with the queuine precursor 7-aminomethyl-7-deazaguanine (PreQ1) at position 34 (anticodon wobble position) in tRNAs with GU(N) anticodons (tRNA-Asp, -Asn, -His and -Tyr). Catalysis occurs through a double-displacement mechanism. The nucleophile active site attacks the C1' of nucleotide 34 to detach the guanine base from the RNA, forming a covalent enzyme-RNA intermediate. The proton acceptor active site deprotonates the incoming PreQ1, allowing a nucleophilic attack on the C1' of the ribose to form the product. After dissociation, two additional enzymatic reactions on the tRNA convert PreQ1 to queuine (Q), resulting in the hypermodified nucleoside queuosine (7-(((4,5-cis-dihydroxy-2-cyclopenten-1-yl)amino)methyl)-7-deazaguanosine). The polypeptide is Queuine tRNA-ribosyltransferase (Dehalococcoides mccartyi (strain CBDB1)).